The chain runs to 212 residues: ATP-dependent dethiobiotin synthetase BioD (212 aa).

Position 12 to 17 (12 to 17 (DCGKTF)) interacts with ATP. Threonine 16 lines the Mg(2+) pocket. Residue lysine 33 is part of the active site. A substrate-binding site is contributed by serine 37. ATP contacts are provided by residues aspartate 50, 110–113 (EGAG), and 170–171 (NC). The Mg(2+) site is built by aspartate 50 and glutamate 110.

This sequence belongs to the dethiobiotin synthetase family. In terms of assembly, homodimer. Mg(2+) serves as cofactor.

It is found in the cytoplasm. The catalysed reaction is (7R,8S)-7,8-diammoniononanoate + CO2 + ATP = (4R,5S)-dethiobiotin + ADP + phosphate + 3 H(+). Its pathway is cofactor biosynthesis; biotin biosynthesis; biotin from 7,8-diaminononanoate: step 1/2. Its function is as follows. Catalyzes a mechanistically unusual reaction, the ATP-dependent insertion of CO2 between the N7 and N8 nitrogen atoms of 7,8-diaminopelargonic acid (DAPA, also called 7,8-diammoniononanoate) to form a ureido ring. In Legionella pneumophila (strain Lens), this protein is ATP-dependent dethiobiotin synthetase BioD.